Consider the following 255-residue polypeptide: Complement C1q-like protein 3 (255 aa).

Positions 1 to 20 (MVLLLVILIPVLVSSAGTSA) are cleaved as a signal peptide. Residues 39-109 (KAPSTAATPD…GLPGPPGAPG (71 aa)) are disordered. In terms of domain architecture, Collagen-like spans 61–111 (GPKGEAGRPGKAGPRGPPGEPGPPGPMGPPGEKGEPGRQGLPGPPGAPGLN). The span at 75–89 (RGPPGEPGPPGPMGP) shows a compositional bias: pro residues. Positions 122 to 255 (STVPKIAFYA…TFSGFIIYAD (134 aa)) constitute a C1q domain.

As to quaternary structure, forms homooligomers. Interacts with ADGRB3. Interacts with C1QL2 and C1QL4, when proteins are coexpressed; this interaction does not occur after secretion. Highly expressed in adipose tissue, with expression levels at least 2 orders of magnitude higher than in other tissues, including brain and kidney.

Its subcellular location is the secreted. Its function is as follows. May regulate the number of excitatory synapses that are formed on hippocampus neurons. Has no effect on inhibitory synapses. Plays a role in glucose homeostasis. Via AMPK signaling pathway, stimulates glucose uptake in adipocytes, myotubes and hepatocytes and enhances insulin-stimulated glucose uptake. In a hepatoma cell line, reduces the expression of gluconeogenic enzymes G6PC1 and PCK1 and hence decreases de novo glucose production. The chain is Complement C1q-like protein 3 (C1QL3) from Homo sapiens (Human).